The chain runs to 357 residues: tRNA/tmRNA (uracil-C(5))-methyltransferase (357 aa).

Residues Gln-180, Tyr-209, Asn-214, Glu-230, and Asp-290 each contribute to the S-adenosyl-L-methionine site. Cys-315 acts as the Nucleophile in catalysis. The Proton acceptor role is filled by Glu-349.

It belongs to the class I-like SAM-binding methyltransferase superfamily. RNA M5U methyltransferase family. TrmA subfamily.

It carries out the reaction uridine(54) in tRNA + S-adenosyl-L-methionine = 5-methyluridine(54) in tRNA + S-adenosyl-L-homocysteine + H(+). The catalysed reaction is uridine(341) in tmRNA + S-adenosyl-L-methionine = 5-methyluridine(341) in tmRNA + S-adenosyl-L-homocysteine + H(+). Its function is as follows. Dual-specificity methyltransferase that catalyzes the formation of 5-methyluridine at position 54 (m5U54) in all tRNAs, and that of position 341 (m5U341) in tmRNA (transfer-mRNA). The polypeptide is tRNA/tmRNA (uracil-C(5))-methyltransferase (Campylobacter jejuni (strain RM1221)).